The sequence spans 48 residues: Large ribosomal subunit protein bL33A (48 aa).

This sequence belongs to the bacterial ribosomal protein bL33 family.

The chain is Large ribosomal subunit protein bL33A from Bacillus anthracis.